We begin with the raw amino-acid sequence, 391 residues long: Na(+)/H(+) antiporter NhaA (391 aa).

11 consecutive transmembrane segments (helical) span residues 14-34 (AGGI…NSPL), 59-79 (LLLW…GLEV), 95-115 (SLPS…YLLF), 124-144 (AGWA…MALL), 154-174 (VFLL…IALF), 177-197 (SDLS…LVGL), 213-233 (LILW…GVII), 261-281 (FLIL…NMSL), 290-310 (IGIA…FSFI), 328-348 (IAPV…IASL), and 363-383 (LGTL…LSKV).

It belongs to the NhaA Na(+)/H(+) (TC 2.A.33) antiporter family.

The protein resides in the cell inner membrane. The enzyme catalyses Na(+)(in) + 2 H(+)(out) = Na(+)(out) + 2 H(+)(in). Functionally, na(+)/H(+) antiporter that extrudes sodium in exchange for external protons. This is Na(+)/H(+) antiporter NhaA from Shewanella putrefaciens (strain CN-32 / ATCC BAA-453).